Reading from the N-terminus, the 86-residue chain is Putative pro-MCH-like protein 2 (86 aa).

The tract at residues 31 to 49 (GSVAFPAENGVQDTESTLE) is NGE-like. Positions 40–60 (GVQDTESTLEKRETGDEENSA) are disordered. Residues 52-64 (ETGDEENSAKFPI) form an NEI-like region. The segment at 68–86 (DFDTLRCMLGRVYQRCWQV) is melanin-concentrating hormone-like.

Belongs to the melanin-concentrating hormone family. Expressed in testis but not in brain.

The sequence is that of Putative pro-MCH-like protein 2 (PMCHL2) from Homo sapiens (Human).